A 222-amino-acid chain; its full sequence is Kinetochore protein Spc25 (222 aa).

Residues Arg-51 to Ala-86 are a coiled coil.

Belongs to the SPC25 family. As to quaternary structure, component of the Ndc80 complex, which is composed of Ndc80, Nuf2 and Spc25.

The protein resides in the nucleus. Its subcellular location is the chromosome. It is found in the centromere. The protein localises to the kinetochore. Its function is as follows. Acts as a component of the essential kinetochore-associated Ndc80 complex, which is required for chromosome segregation and spindle checkpoint activity during meiosis and mitosis. Required for kinetochore integrity and the organization of stable microtubule binding sites in the outer plate of the kinetochore. Participates in SAC signaling that responds specifically to disruptions in spindle microtubule dynamics. The NDC80 complex synergistically enhances the affinity of the SKA1 complex for microtubules and may allow the NDC80 complex to track depolymerizing microtubules. The chain is Kinetochore protein Spc25 from Drosophila melanogaster (Fruit fly).